We begin with the raw amino-acid sequence, 258 residues long: Alcohol dehydrogenase 2 (258 aa).

Residue 9–33 (IFVGGLGFIGYEACKQLMAKNMASF) coordinates NAD(+). Residue serine 137 coordinates substrate. The active-site Proton acceptor is tyrosine 150.

Belongs to the short-chain dehydrogenases/reductases (SDR) family. In terms of assembly, homodimer.

The enzyme catalyses a primary alcohol + NAD(+) = an aldehyde + NADH + H(+). It carries out the reaction a secondary alcohol + NAD(+) = a ketone + NADH + H(+). The chain is Alcohol dehydrogenase 2 (ADH2) from Ceratitis cosyra (Mango fruit fly).